The chain runs to 507 residues: Probable circularly permuted 1,3-beta-glucanase P23A10.11c YJL171C (507 aa).

An N-terminal signal peptide occupies residues 1–22 (MIAKSFIASFLFLCFAFSGVKA). Low complexity predominate over residues 228 to 264 (AAPPDSASESTPASTSYASSTTSATSTSTTSGSSGSS). Residues 228-266 (AAPPDSASESTPASTSYASSTTSATSTSTTSGSSGSSDW) form a disordered region. Residues 412 to 417 (EFDIFE) carry the ExDxxE motif motif. A glycan (N-linked (GlcNAc...) asparagine) is linked at N480.

Belongs to the PGA52 family.

The protein resides in the secreted. The catalysed reaction is Hydrolysis of (1-&gt;3)-beta-D-glucosidic linkages in (1-&gt;3)-beta-D-glucans.. Probable circularly permuted 1,3-beta-glucanase involved in cell wall modification through beta-1,3-glucan network alterations such as increased branching or remodeling. This Schizosaccharomyces pombe (strain 972 / ATCC 24843) (Fission yeast) protein is Probable circularly permuted 1,3-beta-glucanase P23A10.11c YJL171C.